The chain runs to 474 residues: ATP synthase subunit beta 1 (474 aa).

157–164 provides a ligand contact to ATP; that stretch reads GGAGVGKT.

Belongs to the ATPase alpha/beta chains family. As to quaternary structure, F-type ATPases have 2 components, CF(1) - the catalytic core - and CF(0) - the membrane proton channel. CF(1) has five subunits: alpha(3), beta(3), gamma(1), delta(1), epsilon(1). CF(0) has three main subunits: a(1), b(2) and c(9-12). The alpha and beta chains form an alternating ring which encloses part of the gamma chain. CF(1) is attached to CF(0) by a central stalk formed by the gamma and epsilon chains, while a peripheral stalk is formed by the delta and b chains.

It localises to the cell inner membrane. It carries out the reaction ATP + H2O + 4 H(+)(in) = ADP + phosphate + 5 H(+)(out). In terms of biological role, produces ATP from ADP in the presence of a proton gradient across the membrane. The catalytic sites are hosted primarily by the beta subunits. The chain is ATP synthase subunit beta 1 from Albidiferax ferrireducens (strain ATCC BAA-621 / DSM 15236 / T118) (Rhodoferax ferrireducens).